Here is a 155-residue protein sequence, read N- to C-terminus: Regulatory protein RecX (155 aa).

The protein belongs to the RecX family.

Its subcellular location is the cytoplasm. Modulates RecA activity. This Pseudomonas savastanoi pv. phaseolicola (strain 1448A / Race 6) (Pseudomonas syringae pv. phaseolicola (strain 1448A / Race 6)) protein is Regulatory protein RecX.